Consider the following 195-residue polypeptide: UPF0167 protein CbrC (195 aa).

The protein belongs to the UPF0167 family.

The sequence is that of UPF0167 protein CbrC (cbrC) from Escherichia coli (strain K12).